The following is a 124-amino-acid chain: Small ribosomal subunit protein uS13 (124 aa).

Residues 99-124 are disordered; the sequence is PCRGQKTKTNARTCKGPKKTVANKKK. Positions 113 to 124 are enriched in basic residues; that stretch reads KGPKKTVANKKK.

It belongs to the universal ribosomal protein uS13 family. In terms of assembly, part of the 30S ribosomal subunit. Forms a loose heterodimer with protein S19. Forms two bridges to the 50S subunit in the 70S ribosome.

Located at the top of the head of the 30S subunit, it contacts several helices of the 16S rRNA. In the 70S ribosome it contacts the 23S rRNA (bridge B1a) and protein L5 of the 50S subunit (bridge B1b), connecting the 2 subunits; these bridges are implicated in subunit movement. Contacts the tRNAs in the A and P-sites. The polypeptide is Small ribosomal subunit protein uS13 (Lachnospira eligens (strain ATCC 27750 / DSM 3376 / VPI C15-48 / C15-B4) (Eubacterium eligens)).